The chain runs to 792 residues: Leucine--tRNA ligase (792 aa).

The short motif at 39-50 (PYPSAAGLHLGH) is the 'HIGH' region element. A 'KMSKS' region motif is present at residues 569–573 (KMSKS). Lysine 572 contributes to the ATP binding site.

It belongs to the class-I aminoacyl-tRNA synthetase family.

Its subcellular location is the cytoplasm. The catalysed reaction is tRNA(Leu) + L-leucine + ATP = L-leucyl-tRNA(Leu) + AMP + diphosphate. The sequence is that of Leucine--tRNA ligase from Mycoplasma genitalium (strain ATCC 33530 / DSM 19775 / NCTC 10195 / G37) (Mycoplasmoides genitalium).